Consider the following 313-residue polypeptide: Glucosyl-dolichyl phosphate glucuronosyltransferase (313 aa).

Residues 284–304 traverse the membrane as a helical segment; it reads LIAIFVFTAAVGFGYVYGLLT.

It belongs to the glycosyltransferase 2 family.

Its subcellular location is the cell membrane. It catalyses the reaction an archaeal dolichyl alpha-D-glucosyl phosphate + UDP-alpha-D-glucuronate = an archaeal dolichyl beta-D-glucuronosyl-(1-&gt;4)-alpha-D-glucosyl phosphate + UDP + H(+). It functions in the pathway cell surface structure biogenesis; S-layer biogenesis. In terms of biological role, involved in the protein N-glycosylation pathway responsible for the assembly and attachment of an N-linked pentasaccharide that decorates the S-layer glycoprotein and flagellins. Catalyzes the transfer of a glucuronate residue (GlcA) to a glucose residue already bound to a dolichol phosphate (DolP), a compound that serves as a glycan lipid carrier in Archaea. In vitro, is able to add GlcA to DolP-Glc in which the omega-position isoprene is not saturated. However, the likely physiological lipid substrate is alpha,omega-saturated. The protein is Glucosyl-dolichyl phosphate glucuronosyltransferase of Haloferax volcanii (strain ATCC 29605 / DSM 3757 / JCM 8879 / NBRC 14742 / NCIMB 2012 / VKM B-1768 / DS2) (Halobacterium volcanii).